The chain runs to 464 residues: Protein FAM90A16 (464 aa).

3 disordered regions span residues 1-42, 70-389, and 415-437; these read MMAR…DPRL, PATL…HDGA, and HSPE…SEAP. Basic and acidic residues-rich tracts occupy residues 74–89 and 97–114; these read GKKE…KPRV and NKDK…DPQR. Residues 180 to 197 show a composition bias toward low complexity; it reads LASLSPLRKASLSSSSSL.

The protein belongs to the FAM90 family.

The chain is Protein FAM90A16 from Homo sapiens (Human).